The sequence spans 743 residues: 1,4-alpha-glucan branching enzyme GlgB (743 aa).

Residue Asp-423 is the Nucleophile of the active site. Catalysis depends on Glu-476, which acts as the Proton donor.

Belongs to the glycosyl hydrolase 13 family. GlgB subfamily. As to quaternary structure, monomer.

The catalysed reaction is Transfers a segment of a (1-&gt;4)-alpha-D-glucan chain to a primary hydroxy group in a similar glucan chain.. The protein operates within glycan biosynthesis; glycogen biosynthesis. Functionally, catalyzes the formation of the alpha-1,6-glucosidic linkages in glycogen by scission of a 1,4-alpha-linked oligosaccharide from growing alpha-1,4-glucan chains and the subsequent attachment of the oligosaccharide to the alpha-1,6 position. This chain is 1,4-alpha-glucan branching enzyme GlgB, found in Pseudomonas fluorescens (strain Pf0-1).